The sequence spans 117 residues: Large ribosomal subunit protein uL18 (117 aa).

It belongs to the universal ribosomal protein uL18 family. As to quaternary structure, part of the 50S ribosomal subunit; part of the 5S rRNA/L5/L18/L25 subcomplex. Contacts the 5S and 23S rRNAs.

Functionally, this is one of the proteins that bind and probably mediate the attachment of the 5S RNA into the large ribosomal subunit, where it forms part of the central protuberance. In Chromobacterium violaceum (strain ATCC 12472 / DSM 30191 / JCM 1249 / CCUG 213 / NBRC 12614 / NCIMB 9131 / NCTC 9757 / MK), this protein is Large ribosomal subunit protein uL18.